The chain runs to 378 residues: MHPVLQSVRNASVSAGGPHQQQPQQQQHGVSSVRRPPSPPRYPAQHAYPGAGATPTAGRGDFDGALDPDEGPVACGLAAGAGVDEVRMRERDAARRATVPEINLFKARRDVVPNGDYERDLMYHSGQAIDIDRQRVLTPEDFKGSEPAFTPAVNHMRAAELKRAAEQTAFGEELRNTCHQTRIRTALLRPEIGAGIYYLYDFVQTYLEHPDGRVKLNPQLVLVAQHAGNTMLAQRLWAIAEEKNAWLRDLIEMAYMIVNDPYLNTEQQLSAICTTVVELSMKYAKLAAKNGYPSMAQMAKAQEFFYRVMQAVLDLGVQVGVYNNRPARYRQKRMSEIPQMTDAEYMFGLTQALESRPPQGESFADEGPSESDDEDDFI.

2 disordered regions span residues 1–73 (MHPV…EGPV) and 355–378 (SRPP…DDFI). Residues 1 to 178 (MHPVLQSVRN…AFGEELRNTC (178 aa)) form an interaction with packaging protein 1 region. Low complexity-rich tracts occupy residues 16 to 35 (GGPH…SVRR) and 49 to 58 (PGAGATPTAG). The residue at position 362 (serine 362) is a Phosphoserine; by host. Residues 363-378 (FADEGPSESDDEDDFI) show a composition bias toward acidic residues.

This sequence belongs to the adenoviridae packaging protein 3 family. Part of the genome packaging complex composed of packaging proteins 1, 2 and 3; this complex specifically binds to the packaging sequence on the left end of viral genomic DNA and performs packaging of the viral genome. Interacts with hexon-linking protein IIIa; this interaction is required to promote correct genome packaging. In terms of processing, cleaved at different sites by the viral protease during virion maturation.

Its subcellular location is the host nucleus. In terms of biological role, involved in viral genome packaging through its interaction with packaging proteins 1 and 2. After proteolytic cleavage by adenovirus protease, L1 52/55k protein is removed from the capsid during viral maturation. The protein is Packaging protein 3 of Galliformes (FAdV-1).